The following is a 258-amino-acid chain: uncharacterized protein (258 aa).

Positions 3 to 58 constitute an HTH deoR-type domain; sequence VAERQQKIVEIVNMRSSIRVSELSDIFSVTEETIRRDLEKLEKEHKLSRSHGGAVS. Positions 20 to 39 form a DNA-binding region, H-T-H motif; sequence IRVSELSDIFSVTEETIRRD.

This is an uncharacterized protein from Bacillus subtilis (strain 168).